We begin with the raw amino-acid sequence, 123 residues long: UPF0102 protein Psyr_4114 (123 aa).

Belongs to the UPF0102 family.

The polypeptide is UPF0102 protein Psyr_4114 (Pseudomonas syringae pv. syringae (strain B728a)).